The chain runs to 470 residues: Transcriptional activator PmfR (470 aa).

As to quaternary structure, forms oligomers in solution, probably homotetramers.

It participates in alkaloid degradation; nicotine degradation [regulation]. Functionally, transcriptional regulator involved in the activation of the purU-mabO-folD-nepA-nepB and mao-ORF55-nbr operons implicated in the nicotine catabolic pathway. The sequence GTTT-14 bp-AAAC seems to be the core binding site of the regulator upstream of the -35 promoter region of the operon. The polypeptide is Transcriptional activator PmfR (pmfR) (Paenarthrobacter nicotinovorans (Arthrobacter nicotinovorans)).